The following is a 490-amino-acid chain: MSGGGPSGGGPGGSGRARTSSFAEPGGGGGGGGGGPGGSASGPGGTGGGKASVGAMGGGVGASSSGGGPSGSGGGGSGGPGAGTSFPPPGVKLGRDSGKVTTVVATVGQGPERSQEVAYTDIKVIGNGSFGVVYQARLAETRELVAIKKVLQDKRFKNRELQIMRKLDHCNIVRLRYFFYSSGEKKDELYLNLVLEYVPETVYRVARHFTKAKLITPIIYIKVYMYQLFRSLAYIHSQGVCHRDIKPQNLLVDPDTAVLKLCDFGSAKQLVRGEPNVSYICSRYYRAPELIFGATDYTSSIDVWSAGCVLAELLLGQPIFPGDSGVDQLVEIIKVLGTPTREQIREMNPNYTEFKFPQIKAHPWTKVFKSSKTPPEAIALCSSLLEYTPSSRLSPLEACAHSFFDELRRLGAQLPNDRPLPPLFNFSPGELSIQPSLNAILIPPHLRSPAGPASPLTTSYNPSSQALTEAQTGQDWQPSDATTATLASSS.

Gly residues predominate over residues 1-15 (MSGGGPSGGGPGGSG). The tract at residues 1–97 (MSGGGPSGGG…PPGVKLGRDS (97 aa)) is disordered. Ser2 bears the N-acetylserine mark. Ser2 carries the post-translational modification Phosphoserine. At Ser21 the chain carries Phosphoserine; by PKB/AKT1. Positions 25-82 (PGGGGGGGGGGPGGSASGPGGTGGGKASVGAMGGGVGASSSGGGPSGSGGGGSGGPGA) are enriched in gly residues. Ser72, Ser77, and Ser97 each carry phosphoserine. In terms of domain architecture, Protein kinase spans 119–404 (YTDIKVIGNG…PLEACAHSFF (286 aa)). Residues 125 to 133 (IGNGSFGVV) and Lys148 contribute to the ATP site. Asp244 functions as the Proton acceptor in the catalytic mechanism. Tyr279 is modified (phosphotyrosine). The segment at 451–490 (GPASPLTTSYNPSSQALTEAQTGQDWQPSDATTATLASSS) is disordered. The segment covering 455 to 480 (PLTTSYNPSSQALTEAQTGQDWQPSD) has biased composition (polar residues). Residues 481–490 (ATTATLASSS) show a composition bias toward low complexity.

Belongs to the protein kinase superfamily. CMGC Ser/Thr protein kinase family. GSK-3 subfamily. Monomer. Interacts with AXIN1 and CTNNB1/beta-catenin. Interacts with ARRB2. Interacts with CTNND2. Interacts with LMBR1L. Interacts with DDX3X. Interacts with TNFRSF10B. Post-translationally, phosphorylated by AKT1 at Ser-21: upon insulin-mediated signaling, the activated PKB/AKT1 protein kinase phosphorylates and deactivates GSK3A, resulting in the dephosphorylation and activation of GYS1. Activated by phosphorylation at Tyr-279.

The enzyme catalyses L-seryl-[tau protein] + ATP = O-phospho-L-seryl-[tau protein] + ADP + H(+). The catalysed reaction is L-threonyl-[tau protein] + ATP = O-phospho-L-threonyl-[tau protein] + ADP + H(+). It carries out the reaction L-seryl-[protein] + ATP = O-phospho-L-seryl-[protein] + ADP + H(+). It catalyses the reaction L-threonyl-[protein] + ATP = O-phospho-L-threonyl-[protein] + ADP + H(+). Its activity is regulated as follows. Activated by phosphorylation at Tyr-279. In response to insulin, inhibited by phosphorylation at Ser-21 by PKB/AKT1; phosphorylation at this site causes a conformational change, preventing access of substrates to the active site. Inhibited by lithium. Constitutively active protein kinase that acts as a negative regulator in the hormonal control of glucose homeostasis, Wnt signaling and regulation of transcription factors and microtubules, by phosphorylating and inactivating glycogen synthase (GYS1 or GYS2), CTNNB1/beta-catenin, APC and AXIN1. Requires primed phosphorylation of the majority of its substrates. Contributes to insulin regulation of glycogen synthesis by phosphorylating and inhibiting GYS1 activity and hence glycogen synthesis. Regulates glycogen metabolism in liver, but not in muscle. May also mediate the development of insulin resistance by regulating activation of transcription factors. In Wnt signaling, regulates the level and transcriptional activity of nuclear CTNNB1/beta-catenin. Facilitates amyloid precursor protein (APP) processing and the generation of APP-derived amyloid plaques found in Alzheimer disease. May be involved in the regulation of replication in pancreatic beta-cells. Is necessary for the establishment of neuronal polarity and axon outgrowth. Through phosphorylation of the anti-apoptotic protein MCL1, may control cell apoptosis in response to growth factors deprivation. Acts as a regulator of autophagy by mediating phosphorylation of KAT5/TIP60 under starvation conditions, activating KAT5/TIP60 acetyltransferase activity and promoting acetylation of key autophagy regulators, such as ULK1 and RUBCNL/Pacer. Negatively regulates extrinsic apoptotic signaling pathway via death domain receptors. Promotes the formation of an anti-apoptotic complex, made of DDX3X, BRIC2 and GSK3B, at death receptors, including TNFRSF10B. The anti-apoptotic function is most effective with weak apoptotic signals and can be overcome by stronger stimulation. The chain is Glycogen synthase kinase-3 alpha (Gsk3a) from Mus musculus (Mouse).